Reading from the N-terminus, the 157-residue chain is Crossover junction endodeoxyribonuclease RuvC (157 aa).

Active-site residues include Asp7, Glu67, and Asp139. Mg(2+) contacts are provided by Asp7, Glu67, and Asp139.

The protein belongs to the RuvC family. In terms of assembly, homodimer which binds Holliday junction (HJ) DNA. The HJ becomes 2-fold symmetrical on binding to RuvC with unstacked arms; it has a different conformation from HJ DNA in complex with RuvA. In the full resolvosome a probable DNA-RuvA(4)-RuvB(12)-RuvC(2) complex forms which resolves the HJ. Mg(2+) is required as a cofactor.

The protein localises to the cytoplasm. The enzyme catalyses Endonucleolytic cleavage at a junction such as a reciprocal single-stranded crossover between two homologous DNA duplexes (Holliday junction).. In terms of biological role, the RuvA-RuvB-RuvC complex processes Holliday junction (HJ) DNA during genetic recombination and DNA repair. Endonuclease that resolves HJ intermediates. Cleaves cruciform DNA by making single-stranded nicks across the HJ at symmetrical positions within the homologous arms, yielding a 5'-phosphate and a 3'-hydroxyl group; requires a central core of homology in the junction. The consensus cleavage sequence is 5'-(A/T)TT(C/G)-3'. Cleavage occurs on the 3'-side of the TT dinucleotide at the point of strand exchange. HJ branch migration catalyzed by RuvA-RuvB allows RuvC to scan DNA until it finds its consensus sequence, where it cleaves and resolves the cruciform DNA. The polypeptide is Crossover junction endodeoxyribonuclease RuvC (Prochlorococcus marinus (strain MIT 9301)).